The primary structure comprises 487 residues: Cyclic AMP-dependent transcription factor ATF-2 (487 aa).

The segment at 7-31 (FLCTAPGCGQRFTNEDHLAVHKHKH) adopts a C2H2-type zinc-finger fold. The residue at position 34 (Thr-34) is a Phosphothreonine; by PKC/PRKCH. Ser-44 is modified (phosphoserine; by VRK1). A phosphothreonine mark is found at Thr-51 and Thr-53. Residue Thr-55 is modified to Phosphothreonine; by VRK1. Residues Ser-72 and Ser-94 each carry the phosphoserine modification. Residue Thr-98 is modified to Phosphothreonine. Ser-103 is subject to Phosphoserine; by PKC/PRKCA and PKC/PRKCB. 2 disordered regions span residues 107–130 (EPSV…TNDE) and 241–355 (PGIP…RQKR). Ser-118 is modified (phosphoserine). Residues 264 to 275 (LTQQHPPVTNGD) are compositionally biased toward polar residues. An essential for its histone acetyltransferase activity region spans residues 278-281 (KGHG). Low complexity predominate over residues 300-316 (PATSTTETPASPAHTTP). Phosphoserine is present on Ser-310. A Phosphoserine; by PKC/PRKCA and PKC/PRKCB modification is found at Ser-322. The span at 328 to 345 (AANEDPDEKRRKFLERNR) shows a compositional bias: basic and acidic residues. The 64-residue stretch at 334-397 (DEKRRKFLER…AQLKQLLLAH (64 aa)) folds into the bZIP domain. The tract at residues 336–356 (KRRKFLERNRAAASRCRQKRK) is basic motif. Lys-339 carries the post-translational modification N6-acetyllysine. At Ser-349 the chain carries Phosphoserine; by PKC/PRKCA and PKC/PRKCB. Lys-356 is modified (N6-acetyllysine). A leucine-zipper region spans residues 362-390 (LEKKAEDLSSLNGQLQSEVTLLRNEVAQL). Residues 387–396 (VAQLKQLLLA) carry the Nuclear export signal motif. Residues 407-487 (KKSGYHTADK…PSSQAQPSGS (81 aa)) form a disordered region. 2 positions are modified to phosphoserine: Ser-424 and Ser-428. Residues 425–436 (VPSSPHTEAIQH) are compositionally biased toward polar residues. Over residues 437 to 449 (SSVSTSNGVSSTS) the composition is skewed to low complexity. The segment covering 457 to 470 (SVLTQMADQSTEPA) has biased composition (polar residues). Phosphoserine; by ATM occurs at positions 472 and 480. The segment covering 478-487 (PSSQAQPSGS) has biased composition (polar residues).

Belongs to the bZIP family. ATF subfamily. As to quaternary structure, binds DNA as a dimer and can form a homodimer in the absence of DNA. Can form a heterodimer with JUN. Heterodimerization is essential for its transcriptional activity. Interacts with SMAD3 and SMAD4. Binds through its N-terminal region to UTF1 which acts as a coactivator of ATF2 transcriptional activity. Interacts with the HK1/VDAC1 complex. Interacts with NBN, MRE11, XPO1, KAT5 and CUL3. In terms of processing, phosphorylation of Thr-51 by MAPK14 and MAPK11, and at Thr-53 by MAPK1/ERK2, MAPK3/ERK1, MAPK11, MAPK12 and MAPK14 in response to external stimulus like insulin causes increased transcriptional activity. Phosphorylated by PLK3 following hyperosmotic stress. Also phosphorylated and activated by JNK and CaMK4. ATM-mediated phosphorylation at Ser-472 and Ser-480 stimulates its function in DNA damage response. Phosphorylation at Ser-44, Thr-55 and Ser-103 activates its transcriptional activity. Phosphorylation at Thr-51 or Thr-53 enhances acetylation of histones H2B and H4.

It is found in the nucleus. The protein resides in the cytoplasm. The protein localises to the mitochondrion outer membrane. In terms of biological role, transcriptional activator which regulates the transcription of various genes, including those involved in anti-apoptosis, cell growth, and DNA damage response. Dependent on its binding partner, binds to CRE (cAMP response element) consensus sequences (5'-TGACGTCA-3') or to AP-1 (activator protein 1) consensus sequences (5'-TGACTCA-3'). In the nucleus, contributes to global transcription and the DNA damage response, in addition to specific transcriptional activities that are related to cell development, proliferation and death. In the cytoplasm, interacts with and perturbs HK1- and VDAC1-containing complexes at the mitochondrial outer membrane, thereby impairing mitochondrial membrane potential, inducing mitochondrial leakage and promoting cell death. The phosphorylated form (mediated by ATM) plays a role in the DNA damage response and is involved in the ionizing radiation (IR)-induced S phase checkpoint control and in the recruitment of the MRN complex into the IR-induced foci (IRIF). Exhibits histone acetyltransferase (HAT) activity which specifically acetylates histones H2B and H4 in vitro. In concert with CUL3 and RBX1, promotes the degradation of KAT5 thereby attenuating its ability to acetylate and activate ATM. Can elicit oncogenic or tumor suppressor activities depending on the tissue or cell type. This Rattus norvegicus (Rat) protein is Cyclic AMP-dependent transcription factor ATF-2 (Atf2).